A 708-amino-acid polypeptide reads, in one-letter code: DNA ligase 2 (708 aa).

NAD(+)-binding positions include 71 to 75, 121 to 122, and Glu-153; these read DADYD and SL. Lys-155 acts as the N6-AMP-lysine intermediate in catalysis. 4 residues coordinate NAD(+): Arg-176, Glu-213, Lys-330, and Lys-354. Residues Cys-448, Cys-451, Cys-466, and Cys-471 each contribute to the Zn(2+) site. Residues 627–708 enclose the BRCT domain; sequence ADAGTLAGKE…LLRLAEAAPE (82 aa).

The protein belongs to the NAD-dependent DNA ligase family. LigA subfamily. The cofactor is Mg(2+). It depends on Mn(2+) as a cofactor.

It catalyses the reaction NAD(+) + (deoxyribonucleotide)n-3'-hydroxyl + 5'-phospho-(deoxyribonucleotide)m = (deoxyribonucleotide)n+m + AMP + beta-nicotinamide D-nucleotide.. DNA ligase that catalyzes the formation of phosphodiester linkages between 5'-phosphoryl and 3'-hydroxyl groups in double-stranded DNA using NAD as a coenzyme and as the energy source for the reaction. It is essential for DNA replication and repair of damaged DNA. In Opitutus terrae (strain DSM 11246 / JCM 15787 / PB90-1), this protein is DNA ligase 2.